The primary structure comprises 596 residues: Actin-histidine N-methyltransferase (596 aa).

S-adenosyl-L-methionine-binding positions include Arg-75, 104–106 (EGY), Arg-254, 275–279 (DMCNH), and 325–327 (NGF). Positions 94–314 (DGFEISNFAD…EGEQIYIFYG (221 aa)) constitute an SET domain. A disordered region spans residues 556-596 (QCKDLNGTQEDPPGGGAVVKEIEKHDPSAKRTEGEPKDAGK). Basic and acidic residues predominate over residues 575 to 596 (KEIEKHDPSAKRTEGEPKDAGK).

This sequence belongs to the class V-like SAM-binding methyltransferase superfamily. SETD3 actin-histidine methyltransferase family.

The protein resides in the cytoplasm. It carries out the reaction L-histidyl-[protein] + S-adenosyl-L-methionine = N(tele)-methyl-L-histidyl-[protein] + S-adenosyl-L-homocysteine + H(+). Functionally, protein-histidine N-methyltransferase that specifically mediates 3-methylhistidine (tele-methylhistidine) methylation of actin at 'His-73'. Does not have protein-lysine N-methyltransferase activity and probably only catalyzes histidine methylation of actin. This chain is Actin-histidine N-methyltransferase, found in Danio rerio (Zebrafish).